The chain runs to 76 residues: U7-lycotoxin-Ls1b (76 aa).

Positions Met1–Ala22 are cleaved as a signal peptide. A propeptide spanning residues Gln23–Gly26 is cleaved from the precursor.

It belongs to the neurotoxin 19 (CSTX) family. 07 (U7-Lctx) subfamily. In terms of processing, contains 4 disulfide bonds. As to expression, expressed by the venom gland.

It is found in the secreted. The protein is U7-lycotoxin-Ls1b of Lycosa singoriensis (Wolf spider).